Consider the following 74-residue polypeptide: Guanine nucleotide-binding protein G(T) subunit gamma-T1 (74 aa).

Cysteine methyl ester is present on cysteine 71. Cysteine 71 carries the S-farnesyl cysteine lipid modification. Residues 72–74 (VIS) constitute a propeptide, removed in mature form.

It belongs to the G protein gamma family. As to quaternary structure, g proteins are composed of 3 units, alpha, beta and gamma. As to expression, retinal rod outer segment.

Its subcellular location is the cell membrane. Guanine nucleotide-binding proteins (G proteins) are involved as a modulator or transducer in various transmembrane signaling systems. The beta and gamma chains are required for the GTPase activity, for replacement of GDP by GTP, and for G protein-effector interaction. This is Guanine nucleotide-binding protein G(T) subunit gamma-T1 (Gngt1) from Mus musculus (Mouse).